A 301-amino-acid chain; its full sequence is Quinolinate synthase (301 aa).

Residues His21 and Ser38 each contribute to the iminosuccinate site. Cys83 is a binding site for [4Fe-4S] cluster. Iminosuccinate is bound by residues Tyr109 to Asn111 and Ser126. Cys169 is a binding site for [4Fe-4S] cluster. Iminosuccinate contacts are provided by residues His195–Glu197 and Thr212. Cys257 lines the [4Fe-4S] cluster pocket.

This sequence belongs to the quinolinate synthase family. Type 2 subfamily. [4Fe-4S] cluster is required as a cofactor.

The protein resides in the cytoplasm. It catalyses the reaction iminosuccinate + dihydroxyacetone phosphate = quinolinate + phosphate + 2 H2O + H(+). Its pathway is cofactor biosynthesis; NAD(+) biosynthesis; quinolinate from iminoaspartate: step 1/1. Catalyzes the condensation of iminoaspartate with dihydroxyacetone phosphate to form quinolinate. This chain is Quinolinate synthase, found in Clostridium perfringens (strain ATCC 13124 / DSM 756 / JCM 1290 / NCIMB 6125 / NCTC 8237 / Type A).